Consider the following 108-residue polypeptide: Small ribosomal subunit protein uS17 (108 aa).

It belongs to the universal ribosomal protein uS17 family. As to quaternary structure, part of the 30S ribosomal subunit.

Functionally, one of the primary rRNA binding proteins, it binds specifically to the 5'-end of 16S ribosomal RNA. In Methanoculleus marisnigri (strain ATCC 35101 / DSM 1498 / JR1), this protein is Small ribosomal subunit protein uS17.